The chain runs to 235 residues: Small ribosomal subunit protein eS6 (235 aa).

S229 and S230 each carry phosphoserine.

This sequence belongs to the eukaryotic ribosomal protein eS6 family. Post-translationally, phosphorylated.

The sequence is that of Small ribosomal subunit protein eS6 (RPS6) from Kluyveromyces marxianus (Yeast).